We begin with the raw amino-acid sequence, 670 residues long: Protein ACCELERATED CELL DEATH 6 (670 aa).

Over 1–456 the chain is Cytoplasmic; that stretch reads MDSSGADLDR…PNYIFHERWT (456 aa). The segment at 18-47 is disordered; it reads LVSHDQRKDFSHSGGVGTTSPTGDTEPVPK. ANK repeat units follow at residues 66-95, 100-129, 134-163, 182-211, 216-248, 260-290, 295-325, 329-358, 363-391, and 399-428; these read EMTP…PMER, TGDS…CLLF, SRQT…SALA, DGNT…DAPF, KGIS…NVDR, QGNK…SLMD, DGRT…GVYV, DGSF…ASKY, LGQN…DTKH, and DGNT…EILK. The helical transmembrane segment at 457–477 threads the bilayer; that stretch reads LALLLYAIHSSGFESVKSLTI. Residues 478 to 492 lie on the Extracellular side of the membrane; that stretch reads QSVPLDPKKNRHYVN. Residues 493 to 513 traverse the membrane as a helical segment; that stretch reads ALLVVAALVATVTFAAGFTIP. At 514–537 the chain is on the cytoplasmic side; sequence GGYISDSKKPNLGRATLATNPTLF. The helical transmembrane segment at 538–558 threads the bilayer; it reads IFLLFDILAMQSSVATICTLI. Residues 559-577 are Extracellular-facing; the sequence is WAQLGDLALILKSLHVALP. The helical transmembrane segment at 578 to 598 threads the bilayer; it reads LLLFSLLCMPVAFLFGVITAI. The Cytoplasmic portion of the chain corresponds to 599-602; that stretch reads AHVK. Residues 603–623 form a helical membrane-spanning segment; the sequence is WLLVTISIISGGFFLFAIFIL. Residues 624–638 are Extracellular-facing; sequence GPHVMLQRSHLPPSS. A helical transmembrane segment spans residues 639-659; that stretch reads GIFLKTFMLTIDISELFVILI. At 660-670 the chain is on the cytoplasmic side; the sequence is KACFGCVACSE.

In terms of assembly, component of large complexes containing, at least, FLS2, HSP70 and ACD6 in endoplasmic reticulum, plasma membrane and soluble fraction. Associated with HSP70 proteins during endoplasmic reticulum-associated degradation (ERAD). Reduced complex levels upon benzothiazole (BTH) treatment. In terms of processing, ubiquitinated. As to expression, basal expression requires light and salicylic acid (SA).

It localises to the cell membrane. The protein resides in the endoplasmic reticulum membrane. In terms of biological role, dose-dependent activator of the defense response against virulent pathogens, including bacteria, fungi and oomycetes, that acts in a positive feedback loop with the defense signal salicylic acid (SA). Regulates the salicylic acid (SA) signaling pathway leading to cell death and modulating cell fate (e.g. cell enlargement and/or cell division). In response to SA signaling, triggers the accumulation of FLS2 at the plasma membrane, thus priming defenses. Involved in SA-dependent freezing signaling and tolerance. This Arabidopsis thaliana (Mouse-ear cress) protein is Protein ACCELERATED CELL DEATH 6.